The chain runs to 493 residues: Cobyric acid synthase (493 aa).

Positions His261 to Val455 constitute a GATase cobBQ-type domain. Catalysis depends on Cys342, which acts as the Nucleophile. His447 is an active-site residue.

It belongs to the CobB/CobQ family. CobQ subfamily.

It participates in cofactor biosynthesis; adenosylcobalamin biosynthesis. Its function is as follows. Catalyzes amidations at positions B, D, E, and G on adenosylcobyrinic A,C-diamide. NH(2) groups are provided by glutamine, and one molecule of ATP is hydrogenolyzed for each amidation. This chain is Cobyric acid synthase, found in Acidovorax sp. (strain JS42).